The sequence spans 240 residues: Pyridoxine 5'-phosphate synthase (240 aa).

3-amino-2-oxopropyl phosphate is bound at residue asparagine 6. Residue 8-9 (DH) coordinates 1-deoxy-D-xylulose 5-phosphate. Arginine 17 is a binding site for 3-amino-2-oxopropyl phosphate. The active-site Proton acceptor is the histidine 42. 2 residues coordinate 1-deoxy-D-xylulose 5-phosphate: arginine 44 and histidine 49. The active-site Proton acceptor is the glutamate 69. Threonine 99 is a 1-deoxy-D-xylulose 5-phosphate binding site. The active-site Proton donor is the histidine 190. Residues glycine 191 and 212–213 (GH) each bind 3-amino-2-oxopropyl phosphate.

This sequence belongs to the PNP synthase family. As to quaternary structure, homooctamer; tetramer of dimers.

The protein localises to the cytoplasm. It carries out the reaction 3-amino-2-oxopropyl phosphate + 1-deoxy-D-xylulose 5-phosphate = pyridoxine 5'-phosphate + phosphate + 2 H2O + H(+). It functions in the pathway cofactor biosynthesis; pyridoxine 5'-phosphate biosynthesis; pyridoxine 5'-phosphate from D-erythrose 4-phosphate: step 5/5. Its function is as follows. Catalyzes the complicated ring closure reaction between the two acyclic compounds 1-deoxy-D-xylulose-5-phosphate (DXP) and 3-amino-2-oxopropyl phosphate (1-amino-acetone-3-phosphate or AAP) to form pyridoxine 5'-phosphate (PNP) and inorganic phosphate. The polypeptide is Pyridoxine 5'-phosphate synthase (Pseudomonas putida (strain ATCC 700007 / DSM 6899 / JCM 31910 / BCRC 17059 / LMG 24140 / F1)).